A 193-amino-acid polypeptide reads, in one-letter code: Recombination protein RecR (193 aa).

The C4-type zinc-finger motif lies at 61–76; sequence CTSCNALSESEVCEIC. The Toprim domain maps to 84-170; it reads SQLCMVLHPR…TFTKIAQGVP (87 aa).

This sequence belongs to the RecR family.

In terms of biological role, may play a role in DNA repair. It seems to be involved in an RecBC-independent recombinational process of DNA repair. It may act with RecF and RecO. The chain is Recombination protein RecR from Helicobacter pylori (strain HPAG1).